The sequence spans 150 residues: Probable histone H2A.7 (150 aa).

Residues 1–12 (MESTGKVKKAFG) are compositionally biased toward basic residues. Disordered regions lie at residues 1–27 (MESTGKVKKAFGGRKPPGAPKTKSVSK) and 129–150 (KSATKPAEEKATKSPVKSPKKA). Position 146 is a phosphoserine (Ser-146). An SPKK motif motif is present at residues 146 to 149 (SPKK).

This sequence belongs to the histone H2A family. The nucleosome is a histone octamer containing two molecules each of H2A, H2B, H3 and H4 assembled in one H3-H4 heterotetramer and two H2A-H2B heterodimers. The octamer wraps approximately 147 bp of DNA. Not ubiquitinated. Strong expression through-out the roots and leaves. Also found in meristems and dividing cells.

It localises to the nucleus. Its subcellular location is the chromosome. Core component of nucleosome. Nucleosomes wrap and compact DNA into chromatin, limiting DNA accessibility to the cellular machineries which require DNA as a template. Histones thereby play a central role in transcription regulation, DNA repair, DNA replication and chromosomal stability. DNA accessibility is regulated via a complex set of post-translational modifications of histones, also called histone code, and nucleosome remodeling. The sequence is that of Probable histone H2A.7 from Arabidopsis thaliana (Mouse-ear cress).